The following is a 168-amino-acid chain: S-ribosylhomocysteine lyase (168 aa).

Fe cation is bound by residues histidine 54, histidine 58, and cysteine 128.

Belongs to the LuxS family. As to quaternary structure, homodimer. Requires Fe cation as cofactor.

The enzyme catalyses S-(5-deoxy-D-ribos-5-yl)-L-homocysteine = (S)-4,5-dihydroxypentane-2,3-dione + L-homocysteine. Functionally, involved in the synthesis of autoinducer 2 (AI-2) which is secreted by bacteria and is used to communicate both the cell density and the metabolic potential of the environment. The regulation of gene expression in response to changes in cell density is called quorum sensing. Catalyzes the transformation of S-ribosylhomocysteine (RHC) to homocysteine (HC) and 4,5-dihydroxy-2,3-pentadione (DPD). This is S-ribosylhomocysteine lyase from Histophilus somni (strain 129Pt) (Haemophilus somnus).